A 425-amino-acid chain; its full sequence is Riboflavin biosynthesis protein RibBA (425 aa).

A DHBP synthase region spans residues 1 to 204; it reads MTRLDSVERA…IADLIEWRRK (204 aa). D-ribulose 5-phosphate contacts are provided by residues 28-29, Asp33, 141-145, and Glu165; these read RE and RPGHT. Residue Glu29 coordinates Mg(2+). Position 144 (His144) interacts with Mg(2+). The tract at residues 205-425 is GTP cyclohydrolase II; it reads HEKHIERIAE…HLPGEFGGAL (221 aa). Residue 259–263 coordinates GTP; that stretch reads RVHSE. 3 residues coordinate Zn(2+): Cys264, Cys275, and Cys277. Residues Gln280, 303–305, and Thr325 contribute to the GTP site; that span reads EGR. The active-site Proton acceptor; for GTP cyclohydrolase activity is the Asp337. Catalysis depends on Arg339, which acts as the Nucleophile; for GTP cyclohydrolase activity. GTP contacts are provided by Thr360 and Lys365.

In the N-terminal section; belongs to the DHBP synthase family. The protein in the C-terminal section; belongs to the GTP cyclohydrolase II family. Mg(2+) serves as cofactor. The cofactor is Mn(2+). Requires Zn(2+) as cofactor.

It catalyses the reaction D-ribulose 5-phosphate = (2S)-2-hydroxy-3-oxobutyl phosphate + formate + H(+). The enzyme catalyses GTP + 4 H2O = 2,5-diamino-6-hydroxy-4-(5-phosphoribosylamino)-pyrimidine + formate + 2 phosphate + 3 H(+). It functions in the pathway cofactor biosynthesis; riboflavin biosynthesis; 2-hydroxy-3-oxobutyl phosphate from D-ribulose 5-phosphate: step 1/1. Its pathway is cofactor biosynthesis; riboflavin biosynthesis; 5-amino-6-(D-ribitylamino)uracil from GTP: step 1/4. Functionally, catalyzes the conversion of D-ribulose 5-phosphate to formate and 3,4-dihydroxy-2-butanone 4-phosphate. Catalyzes the conversion of GTP to 2,5-diamino-6-ribosylamino-4(3H)-pyrimidinone 5'-phosphate (DARP), formate and pyrophosphate. This is Riboflavin biosynthesis protein RibBA from Mycobacterium avium (strain 104).